The primary structure comprises 332 residues: Homoarginine-6-hydroxylase 2-ODD-C23.1 (332 aa).

The Fe2OG dioxygenase domain maps to 182 to 287 (PFWVMRLIGY…RVCVAFFYET (106 aa)). Residues histidine 210, aspartate 212, and histidine 268 each coordinate Fe cation. A 2-oxoglutarate-binding site is contributed by arginine 278.

This sequence belongs to the iron/ascorbate-dependent oxidoreductase family. It depends on Fe(2+) as a cofactor.

The protein localises to the cytoplasm. Its subcellular location is the cytosol. The enzyme catalyses L-homoarginine + 2-oxoglutarate + O2 = 6-hydroxy-L-homoarginine + succinate + CO2. Its activity is regulated as follows. Slightly inhibited by canavanine (Can), the 5-oxa-analog of arginine. In terms of biological role, 2-oxoglutarate-dependent dioxygenase catalyzing homoarginine 6-hydroxylation thus producing 6-hydroxy-L-homoarginine. Guanidine (Gd) is in turn synthesized by the spontaneous conversion of 6-hydroxy-L-homoarginine to (S)-2-amino-6-oxohexanoate (RHEA:79843); guanidine is a nitrogen-rich compound that can serve as a defense or signaling substance. The chain is Homoarginine-6-hydroxylase 2-ODD-C23.1 from Arabidopsis thaliana (Mouse-ear cress).